The following is a 1083-amino-acid chain: Neisserial autotransporter lipoprotein NalP (1083 aa).

The N-terminal stretch at 1-27 (MRTTPTFPTKTFKPTAMALAVATTLSA) is a signal peptide. C28 is lipidated: N-palmitoyl cysteine. C28 carries S-diacylglycerol cysteine lipidation. One can recognise a Peptidase S8 domain in the interval 111–483 (NDAYKNLINL…WGLLDAGKAM (373 aa)). Active-site charge relay system residues include D139, H211, and S427. An Autotransporter domain is found at 809-1083 (DGLDHNGTGL…SGRVGVGYRF (275 aa)). 12 beta stranded membrane passes run 819-828 (RVIAQTQQDG), 844-852 (TQTVGIAAK), 858-866 (TAAATLGMG), 883-891 (SLFAGIRHD), 897-906 (YLKGLFSYGR), 931-941 (QLGALGGVNVP), 948-958 (LTVEGGLRYDL), 984-994 (VGLAGLKLSQP), 1000-1010 (VLFATAGVERD), 1041-1052 (RLVAGLGADVEF), 1057-1066 (NGLARYSYAG), and 1074-1083 (SGRVGVGYRF).

The protein belongs to the peptidase S8 family. A fusion protein of the first 44 residues with beta-lactamase is lipidated in E.coli, strongly suggesting this is a lipoprotein in situ. The lipidated form is briefly retained on the cell surface which allows it to process its endogenous substrates on the cell surface before the passenger domain is released into the medium.

It is found in the cell outer membrane. It localises to the cell surface. Its subcellular location is the secreted. Functionally, major human immunogenic protein. Autotransporter with a secreted protease domain involved in processing other autotransporter proteins including App and IgA. Probably autoprocesses to release the about 70 kDa passenger domain. Processes the lactoferrin receptor lipoprotein subunit (LbpB) extracellularly, releasing it from the cell surface. LbpB release protects bacteria against complement-mediated killing by anti-LbpB antibodies. Processes NHBA. Lipidation slows its auto-processing, probably allowing it to act on endogenous substrates on the cell surface before the passenger domain is released into the medium. The C-terminal beta-barrel domain inserts into the outer membrane where it probably exports the N-terminal passenger domain. Both the cell surface protein (Neisserial autotransporter lipoprotein NalP) and the passenger domain cleave human (host) complement factor C3, generating a shorter alpha chain and a longer beta chain than normal. In terms of biological role, plays a role in extracellular-DNA (eDNA) mediated biofilm formation. In some strains (including cc32 strain H44/76 but not cc11 strain B16B6) eDNA stimulates biofilm formation. When NalP is not expressed (and no longer processes NHBA or IgA) biofilm formation increases. This is probably because the number of positively charged, DNA-binding peptides on the cell surface rises, resulting in increased biofilm formation. Its function is as follows. Cleaves human (host) complement factor C3, generating a shorter alpha chain and a longer beta chain than normal. Does not act on mouse or rabbit C3. Cleavage causes C3b degradation by human CFI and CFH, decreases deposition of C3b on the bacteria surface and probably facilitates complement escape. This chain is Neisserial autotransporter lipoprotein NalP, found in Neisseria meningitidis serogroup B / serotype 15 (strain H44/76).